The sequence spans 389 residues: Arrestin-C (389 aa).

Residues 369 to 389 form a disordered region; sequence AQQEPSGESQEALAAEGNEGS.

Belongs to the arrestin family. In terms of assembly, homodimer; disulfide-linked in response to retinal illumination. Interacts with CXCR4; the interaction is dependent on the C-terminal phosphorylation of CXCR4 and modulates the calcium ion mobilization activity of CXCR4. Interacts with GPR84. Expressed in cone photoreceptors in the retina (at protein level).

It localises to the photoreceptor inner segment. It is found in the cell projection. The protein resides in the cilium. The protein localises to the photoreceptor outer segment. Functionally, may play a role in an as yet undefined retina-specific signal transduction. Could bind to photoactivated-phosphorylated red/green opsins. The sequence is that of Arrestin-C (ARR3) from Bos taurus (Bovine).